A 225-amino-acid chain; its full sequence is Cytidylate kinase (225 aa).

An ATP-binding site is contributed by 12–20 (GPSGAGKGT).

The protein belongs to the cytidylate kinase family. Type 1 subfamily.

Its subcellular location is the cytoplasm. The enzyme catalyses CMP + ATP = CDP + ADP. The catalysed reaction is dCMP + ATP = dCDP + ADP. The protein is Cytidylate kinase of Vibrio cholerae serotype O1 (strain ATCC 39315 / El Tor Inaba N16961).